The sequence spans 300 residues: Ribosomal protein L11 methyltransferase (300 aa).

Threonine 148, glycine 171, aspartate 193, and asparagine 235 together coordinate S-adenosyl-L-methionine.

The protein belongs to the methyltransferase superfamily. PrmA family.

The protein localises to the cytoplasm. The enzyme catalyses L-lysyl-[protein] + 3 S-adenosyl-L-methionine = N(6),N(6),N(6)-trimethyl-L-lysyl-[protein] + 3 S-adenosyl-L-homocysteine + 3 H(+). Methylates ribosomal protein L11. The polypeptide is Ribosomal protein L11 methyltransferase (Desulfotalea psychrophila (strain LSv54 / DSM 12343)).